Reading from the N-terminus, the 42-residue chain is Large ribosomal subunit protein bL34c (42 aa).

The protein belongs to the bacterial ribosomal protein bL34 family.

It localises to the plastid. Its subcellular location is the chloroplast. The sequence is that of Large ribosomal subunit protein bL34c (rpl34) from Olisthodiscus luteus (Marine phytoflagellate).